Reading from the N-terminus, the 384-residue chain is MSSATSGEYWLISVPGEKGANDAWDKLNRSTGNTSTNSKYLIPDLKVGTLDQLVGLSDDLSKLDTSAEAVIRKLVQYFTEVLEEDKSKIAENLVIGNKDMKTYVTKFQWEGAKYPLKQSLKVLSEIIGKQISQIDNDLKVKSLTYNNLKNALASMDRKTVGSLLTKDLADLVKADDFVLNSEYLQTVIVVVPKISVKEWEQKYATLSSMVVPGSSKLLTEEGEHALYTVTLFKKVIDEFKNTARENKFIVRDFVYDEETLKAGRTERDKLMAEKQRQYAPLIRWLKINFGEIFAAYIHIKALRVFVESVLRYGLPVNFQAAVIEPAKGQQKKLRQELHKLYIHLDGSAAGPIDTLEDSPALMSLGVNEYYPYVFFKLNIDFLNK.

Belongs to the V-ATPase C subunit family. In terms of assembly, V-ATPase is a heteromultimeric enzyme made up of two complexes: the ATP-hydrolytic V1 complex and the proton translocation V0 complex. The V1 complex consists of three catalytic AB heterodimers that form a heterohexamer, three peripheral stalks each consisting of EG heterodimers, one central rotor including subunits D and F, and the regulatory subunits C and H. The proton translocation complex V0 consists of the proton transport subunit a, a ring of proteolipid subunits c9c'', rotary subunit d, subunits e and f, and the accessory subunits vah-19/Ac45 and vah-20/PRR. Interacts with V-type proton ATPase subunits a1 unc-32, a2 vha-5 and a3 vha-6. Expressed ubiquitously; higher levels are found in gastrointestinal and hypodermal cells, as well as H-shaped excretory cell.

The protein resides in the cytoplasm. It localises to the membrane. Functionally, subunit of the V1 complex of vacuolar(H+)-ATPase (V-ATPase), a multisubunit enzyme composed of a peripheral complex (V1) that hydrolyzes ATP and a membrane integral complex (V0) that translocates protons. V-ATPase is responsible for acidifying and maintaining the pH of intracellular compartments and in some cell types, is targeted to the plasma membrane, where it is responsible for acidifying the extracellular environment. Subunit C is necessary for the assembly of the catalytic sector of the enzyme and is likely to have a specific function in its catalytic activity. Has roles in embryogenesis and ovulation. This chain is V-type proton ATPase subunit C, found in Caenorhabditis elegans.